The following is a 316-amino-acid chain: MKALWAVLVVTLLAGCLAEGEPELEPEVTDRLAWQSGQPWEVALGRFWDYLRWVQTLSDQVQEELQSSQVTQELTVLMEDTMTELKAYKKELEEQLGPMAEETRARLAKEVQAAQSRLGADMEDLRNRLAQYRNEVHTMLGQSTEELRARLSTHLRKLRKRLMRDAEDLQKRLAVYKAGAREGAERGVGAIRERLGPLVEQGRQRTANLGAGAGKPLQDRAQALGARIRGRLEEVGNQARDRLEEMREQMEEVRAKVEEQAQQMRLQAEIFQARLKGWFEPLVEDMQRQWANLVEKIQASVAANPIPPSSVPQESP.

Residues 1–18 (MKALWAVLVVTLLAGCLA) form the signal peptide. A run of 8 repeats spans residues 76 to 97 (VLMEDTMTELKAYKKELEEQLG), 98 to 119 (PMAEETRARLAKEVQAAQSRLG), 120 to 141 (ADMEDLRNRLAQYRNEVHTMLG), 142 to 163 (QSTEELRARLSTHLRKLRKRLM), 164 to 185 (RDAEDLQKRLAVYKAGAREGAE), 186 to 207 (RGVGAIRERLGPLVEQGRQRTA), 208 to 229 (NLGAGAGKPLQDRAQALGARIR), and 230 to 251 (GRLEEVGNQARDRLEEMREQME). Positions 76–251 (VLMEDTMTEL…RLEEMREQME (176 aa)) are 8 X 22 AA approximate tandem repeats. Methionine 139 is subject to Methionine sulfoxide. The residue at position 143 (serine 143) is a Phosphoserine. The tract at residues 154 to 164 (HLRKLRKRLMR) is LDL and other lipoprotein receptors binding. 158–161 (LRKR) provides a ligand contact to heparin. Positions 206-286 (TANLGAGAGK…GWFEPLVEDM (81 aa)) are lipid-binding and lipoprotein association. Residue 225–232 (GARIRGRL) coordinates heparin. The interval 262-316 (QQMRLQAEIFQARLKGWFEPLVEDMQRQWANLVEKIQASVAANPIPPSSVPQESP) is homooligomerization. The interval 274–286 (RLKGWFEPLVEDM) is specificity for association with VLDL.

This sequence belongs to the apolipoprotein A1/A4/E family. As to quaternary structure, homotetramer. May interact with ABCA1; functionally associated with ABCA1 in the biogenesis of HDLs. May interact with APP/A4 amyloid-beta peptide; the interaction is extremely stable in vitro but its physiological significance is unclear. May interact with MAPT. May interact with MAP2. In the cerebrospinal fluid, interacts with secreted SORL1. Interacts with PMEL; this allows the loading of PMEL luminal fragment on ILVs to induce fibril nucleation. In terms of processing, APOE exists as multiple glycosylated and sialylated glycoforms within cells and in plasma. The extent of glycosylation and sialylation are tissue and context specific. Glycated in plasma VLDL. Post-translationally, phosphorylated by FAM20C in the extracellular medium.

The protein localises to the secreted. It localises to the extracellular space. It is found in the extracellular matrix. Its subcellular location is the extracellular vesicle. The protein resides in the endosome. The protein localises to the multivesicular body. Functionally, APOE is an apolipoprotein, a protein associating with lipid particles, that mainly functions in lipoprotein-mediated lipid transport between organs via the plasma and interstitial fluids. APOE is a core component of plasma lipoproteins and is involved in their production, conversion and clearance. Apolipoproteins are amphipathic molecules that interact both with lipids of the lipoprotein particle core and the aqueous environment of the plasma. As such, APOE associates with chylomicrons, chylomicron remnants, very low density lipoproteins (VLDL) and intermediate density lipoproteins (IDL) but shows a preferential binding to high-density lipoproteins (HDL). It also binds a wide range of cellular receptors including the LDL receptor/LDLR, the LDL receptor-related proteins LRP1, LRP2 and LRP8 and the very low-density lipoprotein receptor/VLDLR that mediate the cellular uptake of the APOE-containing lipoprotein particles. Finally, APOE also has a heparin-binding activity and binds heparan-sulfate proteoglycans on the surface of cells, a property that supports the capture and the receptor-mediated uptake of APOE-containing lipoproteins by cells. A main function of APOE is to mediate lipoprotein clearance through the uptake of chylomicrons, VLDLs, and HDLs by hepatocytes. APOE is also involved in the biosynthesis by the liver of VLDLs as well as their uptake by peripheral tissues ensuring the delivery of triglycerides and energy storage in muscle, heart and adipose tissues. By participating in the lipoprotein-mediated distribution of lipids among tissues, APOE plays a critical role in plasma and tissues lipid homeostasis. APOE is also involved in two steps of reverse cholesterol transport, the HDLs-mediated transport of cholesterol from peripheral tissues to the liver, and thereby plays an important role in cholesterol homeostasis. First, it is functionally associated with ABCA1 in the biogenesis of HDLs in tissues. Second, it is enriched in circulating HDLs and mediates their uptake by hepatocytes. APOE also plays an important role in lipid transport in the central nervous system, regulating neuron survival and sprouting. This is Apolipoprotein E (Apoe) from Peromyscus leucopus (White-footed mouse).